The following is a 128-amino-acid chain: Sulfurtransferase TusD (128 aa).

The active-site Cysteine persulfide intermediate is Cys78.

It belongs to the DsrE/TusD family. Heterohexamer, formed by a dimer of trimers. The hexameric TusBCD complex contains 2 copies each of TusB, TusC and TusD. The TusBCD complex interacts with TusE.

It localises to the cytoplasm. Its function is as follows. Part of a sulfur-relay system required for 2-thiolation of 5-methylaminomethyl-2-thiouridine (mnm(5)s(2)U) at tRNA wobble positions. Accepts sulfur from TusA and transfers it in turn to TusE. The chain is Sulfurtransferase TusD from Buchnera aphidicola subsp. Schizaphis graminum (strain Sg).